Here is a 206-residue protein sequence, read N- to C-terminus: LexA repressor (206 aa).

Positions 28–48 (RAEIATRLGFKSANAAEEHLK) form a DNA-binding region, H-T-H motif. Active-site for autocatalytic cleavage activity residues include S123 and K160.

It belongs to the peptidase S24 family. As to quaternary structure, homodimer.

The catalysed reaction is Hydrolysis of Ala-|-Gly bond in repressor LexA.. In terms of biological role, represses a number of genes involved in the response to DNA damage (SOS response), including recA and lexA. In the presence of single-stranded DNA, RecA interacts with LexA causing an autocatalytic cleavage which disrupts the DNA-binding part of LexA, leading to derepression of the SOS regulon and eventually DNA repair. This Shewanella sp. (strain ANA-3) protein is LexA repressor.